Reading from the N-terminus, the 71-residue chain is Exodeoxyribonuclease 7 small subunit (71 aa).

Belongs to the XseB family. As to quaternary structure, heterooligomer composed of large and small subunits.

The protein resides in the cytoplasm. The catalysed reaction is Exonucleolytic cleavage in either 5'- to 3'- or 3'- to 5'-direction to yield nucleoside 5'-phosphates.. In terms of biological role, bidirectionally degrades single-stranded DNA into large acid-insoluble oligonucleotides, which are then degraded further into small acid-soluble oligonucleotides. The sequence is that of Exodeoxyribonuclease 7 small subunit from Streptococcus pyogenes serotype M1.